We begin with the raw amino-acid sequence, 87 residues long: Small ribosomal subunit protein bS20 (87 aa).

Residues Met1–Ala15 are compositionally biased toward basic residues. 2 disordered regions span residues Met1 to Lys22 and Lys64 to Ala87.

This sequence belongs to the bacterial ribosomal protein bS20 family.

Binds directly to 16S ribosomal RNA. This Hyphomonas neptunium (strain ATCC 15444) protein is Small ribosomal subunit protein bS20.